Consider the following 199-residue polypeptide: MNLAEGVQIVSFAILAAMMIGSAIGVVLLENVVYSAFLLGGVFISIAGLYLLLNADFVAAAQVLIYVGAVNVLILFAIMLVNKREAFQPIAKSWIRRAATALVCAGIFALLSAMVLTTPWAISTAVPIESSIITIGLHFFTDFLLPFELASILLLMALVGAIVLARREFLPDEDEADTALTLPERPRELVPAGQNNPEN.

A run of 5 helical transmembrane segments spans residues 9 to 29 (IVSFAILAAMMIGSAIGVVLL), 32 to 52 (VVYSAFLLGGVFISIAGLYLL), 61 to 81 (AQVLIYVGAVNVLILFAIMLV), 102 to 122 (LVCAGIFALLSAMVLTTPWAI), and 143 to 163 (FLLPFELASILLLMALVGAIV).

It belongs to the complex I subunit 6 family.

It localises to the membrane. The catalysed reaction is a plastoquinone + NADH + (n+1) H(+)(in) = a plastoquinol + NAD(+) + n H(+)(out). The enzyme catalyses a plastoquinone + NADPH + (n+1) H(+)(in) = a plastoquinol + NADP(+) + n H(+)(out). Its function is as follows. NDH-1 shuttles electrons from NAD(P)H, via FMN and iron-sulfur (Fe-S) centers, to quinones in the respiratory chain. The immediate electron acceptor for the enzyme in this species is believed to be plastoquinone. Couples the redox reaction to proton translocation (for every two electrons transferred, four hydrogen ions are translocated across the cytoplasmic membrane), and thus conserves the redox energy in a proton gradient. The polypeptide is NAD(P)H-quinone oxidoreductase chain 6 (ndhG) (Leptolyngbya boryana (Plectonema boryanum)).